Here is a 415-residue protein sequence, read N- to C-terminus: uncharacterized protein (415 aa).

H88 contributes to the Zn(2+) binding site. The active site involves D90. Residue D121 coordinates Zn(2+). E155 functions as the Proton acceptor in the catalytic mechanism. Residues E156, D185, and H392 each contribute to the Zn(2+) site.

It belongs to the peptidase M20A family. Requires Zn(2+) as cofactor. It depends on Co(2+) as a cofactor.

This is an uncharacterized protein from Methanococcus maripaludis (strain DSM 14266 / JCM 13030 / NBRC 101832 / S2 / LL).